The primary structure comprises 210 residues: Imidazole glycerol phosphate synthase subunit HisH (210 aa).

One can recognise a Glutamine amidotransferase type-1 domain in the interval 3–210 (KVALLDYGSG…QLLRNWIDLL (208 aa)). The active-site Nucleophile is cysteine 81. Catalysis depends on residues histidine 191 and glutamate 193.

In terms of assembly, heterodimer of HisH and HisF.

It localises to the cytoplasm. It carries out the reaction 5-[(5-phospho-1-deoxy-D-ribulos-1-ylimino)methylamino]-1-(5-phospho-beta-D-ribosyl)imidazole-4-carboxamide + L-glutamine = D-erythro-1-(imidazol-4-yl)glycerol 3-phosphate + 5-amino-1-(5-phospho-beta-D-ribosyl)imidazole-4-carboxamide + L-glutamate + H(+). The enzyme catalyses L-glutamine + H2O = L-glutamate + NH4(+). It participates in amino-acid biosynthesis; L-histidine biosynthesis; L-histidine from 5-phospho-alpha-D-ribose 1-diphosphate: step 5/9. In terms of biological role, IGPS catalyzes the conversion of PRFAR and glutamine to IGP, AICAR and glutamate. The HisH subunit catalyzes the hydrolysis of glutamine to glutamate and ammonia as part of the synthesis of IGP and AICAR. The resulting ammonia molecule is channeled to the active site of HisF. The chain is Imidazole glycerol phosphate synthase subunit HisH from Corynebacterium diphtheriae (strain ATCC 700971 / NCTC 13129 / Biotype gravis).